Reading from the N-terminus, the 130-residue chain is DNA-directed RNA polymerase subunit omega (130 aa).

Residues 108-130 (TEEELLKGLEGLAPPEEQPEEDE) are disordered.

It belongs to the RNA polymerase subunit omega family. In terms of assembly, the RNAP catalytic core consists of 2 alpha, 1 beta, 1 beta' and 1 omega subunit. When a sigma factor is associated with the core the holoenzyme is formed, which can initiate transcription.

It carries out the reaction RNA(n) + a ribonucleoside 5'-triphosphate = RNA(n+1) + diphosphate. In terms of biological role, promotes RNA polymerase assembly. Latches the N- and C-terminal regions of the beta' subunit thereby facilitating its interaction with the beta and alpha subunits. The protein is DNA-directed RNA polymerase subunit omega of Rhodopseudomonas palustris (strain ATCC BAA-98 / CGA009).